A 426-amino-acid polypeptide reads, in one-letter code: Serine--tRNA ligase (426 aa).

233 to 235 (TAE) contacts L-serine. 264–266 (RSE) contributes to the ATP binding site. Residue E287 participates in L-serine binding. Residue 351-354 (EISS) coordinates ATP. S387 contacts L-serine.

Belongs to the class-II aminoacyl-tRNA synthetase family. Type-1 seryl-tRNA synthetase subfamily. Homodimer. The tRNA molecule binds across the dimer.

The protein localises to the cytoplasm. It catalyses the reaction tRNA(Ser) + L-serine + ATP = L-seryl-tRNA(Ser) + AMP + diphosphate + H(+). The enzyme catalyses tRNA(Sec) + L-serine + ATP = L-seryl-tRNA(Sec) + AMP + diphosphate + H(+). Its pathway is aminoacyl-tRNA biosynthesis; selenocysteinyl-tRNA(Sec) biosynthesis; L-seryl-tRNA(Sec) from L-serine and tRNA(Sec): step 1/1. Catalyzes the attachment of serine to tRNA(Ser). Is also able to aminoacylate tRNA(Sec) with serine, to form the misacylated tRNA L-seryl-tRNA(Sec), which will be further converted into selenocysteinyl-tRNA(Sec). This chain is Serine--tRNA ligase, found in Pseudomonas aeruginosa (strain LESB58).